The following is a 794-amino-acid chain: Sucrose synthase (794 aa).

A GT-B glycosyltransferase region spans residues 263 to 742; that stretch reads MISRLLILSP…ALDRVASRYT (480 aa).

It belongs to the glycosyltransferase 1 family. In terms of assembly, homotetramer.

It catalyses the reaction an NDP-alpha-D-glucose + D-fructose = a ribonucleoside 5'-diphosphate + sucrose + H(+). The enzyme catalyses ADP-alpha-D-glucose + D-fructose = sucrose + ADP + H(+). Inhibited by GDP over 10 mM and by over 2 mM MgCl(2). Catalyzes the reversible conversion of sucrose and a nucleotide disphosphate (NDP) into fructose and NDP-glucose; although the reaction is freely reversible in vitro, the physiological reaction seems to be sucrose cleavage. Unlike characterized plant enzymes prefers ADP as a cosubstrate, whereas plants prefer UDP. The KM for sucrose is 8-fold lower in the presence of ADP than UDP. Its preference for ADP over UDP suggests it may directly link sucrose and glycogen metabolism. This chain is Sucrose synthase (ss2), found in Nitrosomonas europaea (strain ATCC 19718 / CIP 103999 / KCTC 2705 / NBRC 14298).